We begin with the raw amino-acid sequence, 242 residues long: tRNA pseudouridine synthase A (242 aa).

The active-site Nucleophile is the Asp51. Tyr107 contacts substrate.

Belongs to the tRNA pseudouridine synthase TruA family. Homodimer.

It carries out the reaction uridine(38/39/40) in tRNA = pseudouridine(38/39/40) in tRNA. Formation of pseudouridine at positions 38, 39 and 40 in the anticodon stem and loop of transfer RNAs. This is tRNA pseudouridine synthase A from Helicobacter acinonychis (strain Sheeba).